We begin with the raw amino-acid sequence, 209 residues long: ATP-dependent Clp protease proteolytic subunit (209 aa).

Residue Ser101 is the Nucleophile of the active site. His126 is an active-site residue.

Belongs to the peptidase S14 family. In terms of assembly, component of the chloroplastic Clp protease core complex.

It is found in the plastid. The protein resides in the chloroplast stroma. It carries out the reaction Hydrolysis of proteins to small peptides in the presence of ATP and magnesium. alpha-casein is the usual test substrate. In the absence of ATP, only oligopeptides shorter than five residues are hydrolyzed (such as succinyl-Leu-Tyr-|-NHMec, and Leu-Tyr-Leu-|-Tyr-Trp, in which cleavage of the -Tyr-|-Leu- and -Tyr-|-Trp bonds also occurs).. Functionally, cleaves peptides in various proteins in a process that requires ATP hydrolysis. Has a chymotrypsin-like activity. Plays a major role in the degradation of misfolded proteins. The protein is ATP-dependent Clp protease proteolytic subunit of Huperzia lucidula (Shining clubmoss).